Consider the following 470-residue polypeptide: Glutamate--tRNA ligase 2 (470 aa).

The 'HIGH' region motif lies at 11-21 (PSPTGHLHLGG). A 'KMSKS' region motif is present at residues 238-242 (KLSKR). Lys241 serves as a coordination point for ATP.

The protein belongs to the class-I aminoacyl-tRNA synthetase family. Glutamate--tRNA ligase type 1 subfamily. In terms of assembly, monomer.

It is found in the cytoplasm. It carries out the reaction tRNA(Glu) + L-glutamate + ATP = L-glutamyl-tRNA(Glu) + AMP + diphosphate. Catalyzes the attachment of glutamate to tRNA(Glu) in a two-step reaction: glutamate is first activated by ATP to form Glu-AMP and then transferred to the acceptor end of tRNA(Glu). This chain is Glutamate--tRNA ligase 2, found in Ehrlichia ruminantium (strain Gardel).